Reading from the N-terminus, the 612-residue chain is Probable translation initiation factor IF-2 (612 aa).

The region spanning L11–L229 is the tr-type G domain. The segment at G20 to T27 is G1. G20–T27 serves as a coordination point for GTP. The segment at L45 to H49 is G2. Residues D84–G87 are G3. GTP contacts are provided by residues D84–H88 and N138–D141. Positions N138–D141 are G4. Residues S207–K209 are G5.

It belongs to the TRAFAC class translation factor GTPase superfamily. Classic translation factor GTPase family. IF-2 subfamily.

Function in general translation initiation by promoting the binding of the formylmethionine-tRNA to ribosomes. Seems to function along with eIF-2. This is Probable translation initiation factor IF-2 from Hyperthermus butylicus (strain DSM 5456 / JCM 9403 / PLM1-5).